Consider the following 440-residue polypeptide: Deoxyguanosinetriphosphate triphosphohydrolase-like protein (440 aa).

Residues 61 to 256 (RLIHSLEVSC…MEAADDLCYS (196 aa)) enclose the HD domain.

It belongs to the dGTPase family. Type 3 subfamily.

This chain is Deoxyguanosinetriphosphate triphosphohydrolase-like protein, found in Synechocystis sp. (strain ATCC 27184 / PCC 6803 / Kazusa).